Reading from the N-terminus, the 402-residue chain is ORC1-type DNA replication protein 17 (402 aa).

2 residues coordinate ATP: Y223 and R235.

Belongs to the CDC6/cdc18 family.

Its function is as follows. Involved in regulation of DNA replication. In Haloarcula marismortui (strain ATCC 43049 / DSM 3752 / JCM 8966 / VKM B-1809) (Halobacterium marismortui), this protein is ORC1-type DNA replication protein 17 (cdc6q).